The chain runs to 272 residues: NAD kinase (272 aa).

Asp50 functions as the Proton acceptor in the catalytic mechanism. NAD(+) is bound by residues 50–51 (DG), 126–127 (NE), Arg152, Asp154, 165–170 (TAYNKS), and Ala189.

This sequence belongs to the NAD kinase family. The cofactor is a divalent metal cation.

Its subcellular location is the cytoplasm. It catalyses the reaction NAD(+) + ATP = ADP + NADP(+) + H(+). Functionally, involved in the regulation of the intracellular balance of NAD and NADP, and is a key enzyme in the biosynthesis of NADP. Catalyzes specifically the phosphorylation on 2'-hydroxyl of the adenosine moiety of NAD to yield NADP. This is NAD kinase from Streptococcus pneumoniae serotype 19F (strain G54).